We begin with the raw amino-acid sequence, 168 residues long: ATP synthase subunit b (168 aa).

Residues 9–29 (SIPFGTIAYTLFIFLLLLVML) form a helical membrane-spanning segment.

Belongs to the ATPase B chain family. As to quaternary structure, F-type ATPases have 2 components, F(1) - the catalytic core - and F(0) - the membrane proton channel. F(1) has five subunits: alpha(3), beta(3), gamma(1), delta(1), epsilon(1). F(0) has three main subunits: a(1), b(2) and c(10-14). The alpha and beta chains form an alternating ring which encloses part of the gamma chain. F(1) is attached to F(0) by a central stalk formed by the gamma and epsilon chains, while a peripheral stalk is formed by the delta and b chains.

The protein localises to the cell membrane. Its function is as follows. F(1)F(0) ATP synthase produces ATP from ADP in the presence of a proton or sodium gradient. F-type ATPases consist of two structural domains, F(1) containing the extramembraneous catalytic core and F(0) containing the membrane proton channel, linked together by a central stalk and a peripheral stalk. During catalysis, ATP synthesis in the catalytic domain of F(1) is coupled via a rotary mechanism of the central stalk subunits to proton translocation. Functionally, component of the F(0) channel, it forms part of the peripheral stalk, linking F(1) to F(0). The chain is ATP synthase subunit b from Bacillus cereus (strain B4264).